Consider the following 116-residue polypeptide: Cation channel sperm-associated auxiliary subunit TMEM262 (116 aa).

At 1 to 16 (MRWRDRIAVLCFPPGL) the chain is on the cytoplasmic side. A helical transmembrane segment spans residues 17 to 38 (MLTVAALILFFIHMGVFASDVH). Residues 39-51 (NFCVIHNYDHMSF) lie on the Extracellular side of the membrane. Residues 52–72 (RYTVVLIFSQVISIGWAAMGS) form a helical membrane-spanning segment. The Cytoplasmic segment spans residues 73–84 (LYAEMTGDKFLR). A helical transmembrane segment spans residues 85-107 (CFALTILILNGAMFFNRLCLEFL). Over 108 to 116 (AINYREERH) the chain is Extracellular.

As to quaternary structure, component of the CatSper complex or CatSpermasome composed of the core pore-forming members CATSPER1, CATSPER2, CATSPER3 and CATSPER4 as well as auxiliary members CATSPERB, CATSPERG, CATSPERD, CATSPERE, CATSPERZ, C2CD6/CATSPERT, SLCO6C1, TMEM249, TMEM262 and EFCAB9. HSPA1 may be an additional auxiliary complex member. The core complex members CATSPER1, CATSPER2, CATSPER3 and CATSPER4 form a heterotetrameric channel. The auxiliary CATSPERB, CATSPERG2, CATSPERD and CATSPERE subunits form a pavilion-like structure over the pore which stabilizes the complex through interactions with CATSPER4, CATSPER3, CATSPER1 and CATSPER2 respectively. SLCO6C1 interacts with CATSPERE and TMEM262/CATSPERH interacts with CATSPERB, further stabilizing the complex. C2CD6/CATSPERT interacts at least with CATSPERD and is required for targeting the CatSper complex in the flagellar membrane.

It localises to the cell projection. The protein resides in the cilium. The protein localises to the flagellum membrane. Functionally, auxiliary component of the CatSper complex, a complex involved in sperm cell hyperactivation. This chain is Cation channel sperm-associated auxiliary subunit TMEM262, found in Mus musculus (Mouse).